Here is a 454-residue protein sequence, read N- to C-terminus: Dihydrolipoyllysine-residue succinyltransferase component of 2-oxoglutarate dehydrogenase complex, mitochondrial (454 aa).

Residues 1–68 (MLSRSRCVSR…RFFQTTAVCK (68 aa)) constitute a mitochondrion transit peptide. The Lipoyl-binding domain occupies 71-145 (VITVQTPAFA…EGGTPLFTLR (75 aa)). S82 is subject to Phosphoserine. K111 carries the N6-lipoyllysine modification. The segment at 147 to 227 (TGAAPAKAKP…KGLRSEHREK (81 aa)) is disordered. The segment covering 149–163 (AAPAKAKPAETPAPA) has biased composition (low complexity). An N6-acetyllysine modification is found at K155. The segment covering 186–197 (PPVPSPSQPPSS) has biased composition (pro residues). A compositionally biased stretch (low complexity) spans 198–217 (KPVSAIKPTAAPPLAEAGAA). K268, K273, K274, K278, and K308 each carry N6-acetyllysine. Catalysis depends on residues H425 and D429.

Belongs to the 2-oxoacid dehydrogenase family. As to quaternary structure, the 2-oxoglutarate dehydrogenase complex is composed of OGDH (2-oxoglutarate dehydrogenase; E1), DLST (dihydrolipoamide succinyltransferase; E2), DLD (dihydrolipoamide dehydrogenase; E3) and the assembly factor KGD4. It contains multiple copies of the three enzymatic components (E1, E2 and E3). In the nucleus, the 2-oxoglutarate dehydrogenase complex associates with KAT2A. Interacts with ABHD11; this interaction maintains the functional lipoylation of the 2-oxoglutarate dehydrogenase complex. (R)-lipoate is required as a cofactor.

The protein localises to the mitochondrion matrix. Its subcellular location is the nucleus. The catalysed reaction is N(6)-[(R)-dihydrolipoyl]-L-lysyl-[protein] + succinyl-CoA = N(6)-[(R)-S(8)-succinyldihydrolipoyl]-L-lysyl-[protein] + CoA. The protein operates within amino-acid degradation; L-lysine degradation via saccharopine pathway; glutaryl-CoA from L-lysine: step 6/6. It functions in the pathway carbohydrate metabolism; tricarboxylic acid cycle. In terms of biological role, dihydrolipoamide succinyltransferase (E2) component of the 2-oxoglutarate dehydrogenase complex. The 2-oxoglutarate dehydrogenase complex catalyzes the overall conversion of 2-oxoglutarate to succinyl-CoA and CO(2). The 2-oxoglutarate dehydrogenase complex is mainly active in the mitochondrion. A fraction of the 2-oxoglutarate dehydrogenase complex also localizes in the nucleus and is required for lysine succinylation of histones: associates with KAT2A on chromatin and provides succinyl-CoA to histone succinyltransferase KAT2A. The polypeptide is Dihydrolipoyllysine-residue succinyltransferase component of 2-oxoglutarate dehydrogenase complex, mitochondrial (Mus musculus (Mouse)).